Reading from the N-terminus, the 287-residue chain is Inositol-1-monophosphatase (287 aa).

4 residues coordinate Mg(2+): glutamate 79, aspartate 96, leucine 98, and aspartate 99. Residue glutamate 79 participates in substrate binding. Residues 98 to 101 (LDGT), arginine 195, and aspartate 224 contribute to the substrate site. Aspartate 224 contacts Mg(2+).

It belongs to the inositol monophosphatase superfamily. Requires Mg(2+) as cofactor.

The enzyme catalyses a myo-inositol phosphate + H2O = myo-inositol + phosphate. The chain is Inositol-1-monophosphatase (suhB) from Synechocystis sp. (strain ATCC 27184 / PCC 6803 / Kazusa).